The chain runs to 396 residues: Interactor of constitutive active ROPs 5 (396 aa).

2 disordered regions span residues 1–49 (MQTP…TQIP) and 99–122 (ALKR…NASE). Coiled coils occupy residues 67 to 124 (KKRT…SEDS) and 158 to 366 (LSSA…TAAS). The span at 99 to 115 (ALKREAQEEAEDAKHQL) shows a compositional bias: basic and acidic residues.

It belongs to the ICR family. As to quaternary structure, component of the active ARAC10-IRC5-KIN13A complex. Homooligomer. Interacts (via C-terminus) with ARAC4, ARAC10, ARAC11 and (via N-terminus) with KIN13A (via C-terminus), but no interactions with SEC3A. As to expression, expressed in xylem cells in the roots and in stamens, petals and pollen.

It is found in the cell membrane. The protein localises to the cytoplasm. Its subcellular location is the cytoskeleton. Functionally, ROP effector binding specifically activated ROPs and linking them to the microtubule cytoskeleton. Involved in ROP-regulated polar growth. Involved in local disassembly of cortical microtubules when associated with ARAC10 and KIN13A and conversely also mediates the elimination of ARAC10 from the plasma membrane by the cortical microtubules. Accumulates at the plus end of shrinking microtubules. Targets KIN13A to microtubules. This is Interactor of constitutive active ROPs 5 (ICR5) from Arabidopsis thaliana (Mouse-ear cress).